We begin with the raw amino-acid sequence, 288 residues long: Plasmodesmata-located protein 6 (288 aa).

The N-terminal stretch at 1–22 (MFATKTVLFIAVVSLLGTFSSA) is a signal peptide. The Extracellular segment spans residues 23-256 (AVDTFIYGGC…NNDDDEIEKT (234 aa)). 2 Gnk2-homologous domains span residues 25–132 (DTFI…NTTF) and 137–234 (DKTV…ARGG). Intrachain disulfides connect cysteine 32–cysteine 110, cysteine 84–cysteine 95, cysteine 98–cysteine 123, cysteine 145–cysteine 212, cysteine 188–cysteine 197, and cysteine 200–cysteine 225. Residues 257 to 277 (LAIIVGLIAGVTLLVVFLSFM) traverse the membrane as a helical segment. The necessary and sufficient for plasmodesmal targeting stretch occupies residues 257-277 (LAIIVGLIAGVTLLVVFLSFM). Residues 278-288 (AKSCERGKGGK) are Cytoplasmic-facing.

The protein belongs to the cysteine-rich repeat secretory protein family. Plasmodesmata-located proteins (PDLD) subfamily. In terms of assembly, (Microbial infection) Interacts with Grapevine fanleaf virus (GFLV) 2B-MP. Highly expressed in inflorescence silique (at mRNA level).

It localises to the cell membrane. It is found in the cell junction. The protein localises to the plasmodesma. Its function is as follows. Modulates cell-to-cell trafficking. This Arabidopsis thaliana (Mouse-ear cress) protein is Plasmodesmata-located protein 6.